Reading from the N-terminus, the 129-residue chain is Glycine cleavage system H protein (129 aa).

Residues 24–106 (TYTVGITEHA…YTDGWIFKIR (83 aa)) enclose the Lipoyl-binding domain. N6-lipoyllysine is present on Lys-65.

It belongs to the GcvH family. In terms of assembly, the glycine cleavage system is composed of four proteins: P, T, L and H. (R)-lipoate is required as a cofactor.

Functionally, the glycine cleavage system catalyzes the degradation of glycine. The H protein shuttles the methylamine group of glycine from the P protein to the T protein. The polypeptide is Glycine cleavage system H protein (Enterobacter sp. (strain 638)).